The primary structure comprises 145 residues: D-aminoacyl-tRNA deacylase (145 aa).

The short motif at 137-138 is the Gly-cisPro motif, important for rejection of L-amino acids element; sequence GP.

Belongs to the DTD family. As to quaternary structure, homodimer.

The protein localises to the cytoplasm. It catalyses the reaction glycyl-tRNA(Ala) + H2O = tRNA(Ala) + glycine + H(+). The catalysed reaction is a D-aminoacyl-tRNA + H2O = a tRNA + a D-alpha-amino acid + H(+). An aminoacyl-tRNA editing enzyme that deacylates mischarged D-aminoacyl-tRNAs. Also deacylates mischarged glycyl-tRNA(Ala), protecting cells against glycine mischarging by AlaRS. Acts via tRNA-based rather than protein-based catalysis; rejects L-amino acids rather than detecting D-amino acids in the active site. By recycling D-aminoacyl-tRNA to D-amino acids and free tRNA molecules, this enzyme counteracts the toxicity associated with the formation of D-aminoacyl-tRNA entities in vivo and helps enforce protein L-homochirality. The chain is D-aminoacyl-tRNA deacylase from Salmonella paratyphi A (strain AKU_12601).